The following is a 383-amino-acid chain: Succinyl-diaminopimelate desuccinylase (383 aa).

Histidine 73 serves as a coordination point for Zn(2+). Residue aspartate 75 is part of the active site. Residue aspartate 107 coordinates Zn(2+). Residue glutamate 141 is the Proton acceptor of the active site. Residues glutamate 142, glutamate 170, and histidine 356 each contribute to the Zn(2+) site.

It belongs to the peptidase M20A family. DapE subfamily. In terms of assembly, homodimer. It depends on Zn(2+) as a cofactor. Co(2+) is required as a cofactor.

It carries out the reaction N-succinyl-(2S,6S)-2,6-diaminopimelate + H2O = (2S,6S)-2,6-diaminopimelate + succinate. It participates in amino-acid biosynthesis; L-lysine biosynthesis via DAP pathway; LL-2,6-diaminopimelate from (S)-tetrahydrodipicolinate (succinylase route): step 3/3. Catalyzes the hydrolysis of N-succinyl-L,L-diaminopimelic acid (SDAP), forming succinate and LL-2,6-diaminopimelate (DAP), an intermediate involved in the bacterial biosynthesis of lysine and meso-diaminopimelic acid, an essential component of bacterial cell walls. This chain is Succinyl-diaminopimelate desuccinylase, found in Pseudomonas fluorescens (strain Pf0-1).